The chain runs to 231 residues: Ribonuclease 3 (231 aa).

An RNase III domain is found at 12–139 (LKAFLQKNNI…LIAAIYLDQG (128 aa)). E52 contacts Mg(2+). D56 is an active-site residue. Residues D125 and E128 each coordinate Mg(2+). The active site involves E128. The DRBM domain occupies 165–231 (DPKSELQEYF…AANALSKLKT (67 aa)).

Belongs to the ribonuclease III family. In terms of assembly, homodimer. The cofactor is Mg(2+).

The protein localises to the cytoplasm. It carries out the reaction Endonucleolytic cleavage to 5'-phosphomonoester.. Functionally, digests double-stranded RNA. Involved in the processing of primary rRNA transcript to yield the immediate precursors to the large and small rRNAs (23S and 16S). Processes some mRNAs, and tRNAs when they are encoded in the rRNA operon. Processes pre-crRNA and tracrRNA of type II CRISPR loci if present in the organism. The sequence is that of Ribonuclease 3 from Mycoplasmopsis synoviae (strain 53) (Mycoplasma synoviae).